We begin with the raw amino-acid sequence, 81 residues long: Exodeoxyribonuclease 7 small subunit (81 aa).

This sequence belongs to the XseB family. As to quaternary structure, heterooligomer composed of large and small subunits.

Its subcellular location is the cytoplasm. The catalysed reaction is Exonucleolytic cleavage in either 5'- to 3'- or 3'- to 5'-direction to yield nucleoside 5'-phosphates.. Functionally, bidirectionally degrades single-stranded DNA into large acid-insoluble oligonucleotides, which are then degraded further into small acid-soluble oligonucleotides. This chain is Exodeoxyribonuclease 7 small subunit, found in Rhodopseudomonas palustris (strain BisA53).